Reading from the N-terminus, the 363-residue chain is S-adenosylmethionine decarboxylase proenzyme (363 aa).

Active-site residues include Glu-9 and Glu-12. Residue Ser-69 is the Schiff-base intermediate with substrate; via pyruvic acid of the active site. At Ser-69 the chain carries Pyruvic acid (Ser); by autocatalysis. The active-site Proton donor; for catalytic activity is Cys-83. Active-site proton acceptor; for processing activity residues include Ser-232 and His-245.

It belongs to the eukaryotic AdoMetDC family. Requires pyruvate as cofactor. Post-translationally, is synthesized initially as an inactive proenzyme. Formation of the active enzyme involves a self-maturation process in which the active site pyruvoyl group is generated from an internal serine residue via an autocatalytic post-translational modification. Two non-identical subunits are generated from the proenzyme in this reaction, and the pyruvate is formed at the N-terminus of the alpha chain, which is derived from the carboxyl end of the proenzyme. The post-translation cleavage follows an unusual pathway, termed non-hydrolytic serinolysis, in which the side chain hydroxyl group of the serine supplies its oxygen atom to form the C-terminus of the beta chain, while the remainder of the serine residue undergoes an oxidative deamination to produce ammonia and the pyruvoyl group blocking the N-terminus of the alpha chain.

The catalysed reaction is S-adenosyl-L-methionine + H(+) = S-adenosyl 3-(methylsulfanyl)propylamine + CO2. It functions in the pathway amine and polyamine biosynthesis; S-adenosylmethioninamine biosynthesis; S-adenosylmethioninamine from S-adenosyl-L-methionine: step 1/1. The protein is S-adenosylmethionine decarboxylase proenzyme (SAMDC) of Spinacia oleracea (Spinach).